The following is a 297-amino-acid chain: MEINGVEIEDTYAEAFPIKIARVLITAVTKRWAQVAATEATGFGTSVIMCPAEAGIERFASPSETPDGRPGAYIQICTFKYEALEEQLLERIGQCVLTAPTTAVFNGLPDSEKQFNVGFKLKFFGDGMESEAQIAGRKVFKVPIMEGDFVTEDNIGAIAGIAGGNFFIFGDSQMSALTAAEAAVDAIAELEGTITPFPGGIVASGSKSGANKYKFLKATANEKFCPSIKDKVENTEIPADVNAVYEIVINGLDEASIKAAMKAGIEAAVTVPGIKKISAGNYGGKLGKYQFKLHELF.

The protein belongs to the FTR family. As to quaternary structure, homotetramer.

The protein resides in the cytoplasm. It catalyses the reaction N-formylmethanofuran + 5,6,7,8-tetrahydromethanopterin + H(+) = N(5)-formyl-5,6,7,8-tetrahydromethanopterin + methanofuran. The protein operates within one-carbon metabolism; methanogenesis from CO(2); 5,10-methenyl-5,6,7,8-tetrahydromethanopterin from CO(2): step 2/3. Functionally, catalyzes the reversible transfer of a formyl group from formylmethanofuran (formyl-MFR) to tetrahydromethanopterin (H(4)MPT) to produce 5-formyl tetrahydromethanopterin (5-formyl-H(4)MPT) and methanofuran (MFR). The sequence is that of Formylmethanofuran--tetrahydromethanopterin formyltransferase from Methanosarcina mazei (strain ATCC BAA-159 / DSM 3647 / Goe1 / Go1 / JCM 11833 / OCM 88) (Methanosarcina frisia).